The primary structure comprises 433 residues: MTAITRITLTGALLAAALLLAALQPARAETLDRIVAVVDDQVVLASELERELATIANQLRSRGQRLPPRDVFQRQVLERLITQRVQLSRAQRVGITVDDATLDAAMQRMARQNNMTLGQFRQAVEQEGFEYNYFREGIREEIAISRLRQAQVEEQVTVTPQEVEEVLETLDDENQEYRLGHILVATPEAASTAQLEEARERIEQLREQIIAGETDFEGAATAFSDAASAMEGGDLGWRLHSQLPSLFAEAIDEGLQAGEVSGVLQNSSGFHLVKLMDQRTQGGERVTETRARHILIRTDGDVITDEDARLRLRSLLERIEAGESFAELAEAYSEDPGSAARGGDLGWTQPGQLVPEFQGAMDALEEGQISAPFASPFGWHIVQVTDRRERDVSRERLRDQLAQQIHQRKVEEAFEQWIRRLRDEAYVDVRVEL.

Positions 1 to 28 (MTAITRITLTGALLAAALLLAALQPARA) are cleaved as a signal peptide. 2 consecutive PpiC domains span residues 174–277 (NQEY…KLMD) and 286–386 (VTET…QVTD).

Its subcellular location is the periplasm. The enzyme catalyses [protein]-peptidylproline (omega=180) = [protein]-peptidylproline (omega=0). Functionally, chaperone involved in the correct folding and assembly of outer membrane proteins. Recognizes specific patterns of aromatic residues and the orientation of their side chains, which are found more frequently in integral outer membrane proteins. May act in both early periplasmic and late outer membrane-associated steps of protein maturation. The protein is Chaperone SurA of Alkalilimnicola ehrlichii (strain ATCC BAA-1101 / DSM 17681 / MLHE-1).